An 86-amino-acid polypeptide reads, in one-letter code: Large ribosomal subunit protein uL23 (86 aa).

Belongs to the universal ribosomal protein uL23 family. In terms of assembly, part of the 50S ribosomal subunit. Contacts protein L29.

Binds to 23S rRNA. One of the proteins that surrounds the polypeptide exit tunnel on the outside of the ribosome. The polypeptide is Large ribosomal subunit protein uL23 (Methanococcus maripaludis (strain C7 / ATCC BAA-1331)).